Consider the following 307-residue polypeptide: Replication termination factor 2 (307 aa).

The interval 193 to 296 (AKLEKKTKKP…SSAKRSKEES (104 aa)) is disordered. Residues 227–241 (GKPEEADPDPREKKS) are compositionally biased toward basic and acidic residues. Ser288 is modified (phosphoserine).

The protein belongs to the rtf2 family. In terms of assembly, interacts with DDI2; probably also interacts with DDI1. Post-translationally, undergoes proteasomal degradation, via DDI1 and DDI2. Removal from stalled replisomes and degradation are required for genome stability.

It is found in the chromosome. Its function is as follows. Replication termination factor which is a component of the elongating replisome. Required for ATR pathway signaling upon DNA damage and has a positive activity during DNA replication. Might function to facilitate fork pausing at replication fork barriers like the rDNA. May be globally required to stimulate ATR signaling after the fork stalls or encounters a lesion. Interacts with nascent DNA. The polypeptide is Replication termination factor 2 (Mus musculus (Mouse)).